A 294-amino-acid chain; its full sequence is Probable 2-(5''-triphosphoribosyl)-3'-dephosphocoenzyme-A synthase (294 aa).

The protein belongs to the CitG/MdcB family.

It catalyses the reaction 3'-dephospho-CoA + ATP = 2'-(5''-triphospho-alpha-D-ribosyl)-3'-dephospho-CoA + adenine. In Streptococcus pyogenes serotype M3 (strain ATCC BAA-595 / MGAS315), this protein is Probable 2-(5''-triphosphoribosyl)-3'-dephosphocoenzyme-A synthase.